The following is a 150-amino-acid chain: Large ribosomal subunit protein uL15 (150 aa).

Polar residues predominate over residues 1–15 (MNLSNLQPAEGSTHN). The interval 1–52 (MNLSNLQPAEGSTHNQNKRLGRGEGSGKGGTSARGHKGAKSRSGYSKKIGFE) is disordered. Residues 23-32 (GEGSGKGGTS) are compositionally biased toward gly residues.

Belongs to the universal ribosomal protein uL15 family. Part of the 50S ribosomal subunit.

Functionally, binds to the 23S rRNA. This Flavobacterium psychrophilum (strain ATCC 49511 / DSM 21280 / CIP 103535 / JIP02/86) protein is Large ribosomal subunit protein uL15.